A 77-amino-acid polypeptide reads, in one-letter code: Antitoxin VapB2 (77 aa).

The region spanning 4-46 (ASVFMTNRSQAVRLPAEVRFSEEIKKLSVRVSGSDRILSPLNQ) is the SpoVT-AbrB domain.

This sequence belongs to the VapB family. As to quaternary structure, probably forms a complex with cognate toxin VapC2.

In terms of biological role, antitoxin component of a type II toxin-antitoxin (TA) system. Neutralizes the effect of cognate toxin VapC2 but not non-cognate toxin VapC2. The polypeptide is Antitoxin VapB2 (Haemophilus influenzae (strain 86-028NP)).